A 561-amino-acid polypeptide reads, in one-letter code: Arginine--tRNA ligase (561 aa).

A 'HIGH' region motif is present at residues 129–139; it reads ANPTGPLHVGH.

The protein belongs to the class-I aminoacyl-tRNA synthetase family. In terms of assembly, monomer.

The protein localises to the cytoplasm. The enzyme catalyses tRNA(Arg) + L-arginine + ATP = L-arginyl-tRNA(Arg) + AMP + diphosphate. This chain is Arginine--tRNA ligase, found in Bordetella petrii (strain ATCC BAA-461 / DSM 12804 / CCUG 43448).